A 597-amino-acid chain; its full sequence is Elongation factor 4 (597 aa).

Residues Gln-2–Gln-184 form the tr-type G domain. GTP is bound by residues Asp-14–Thr-19 and Asn-131–Asp-134.

It belongs to the TRAFAC class translation factor GTPase superfamily. Classic translation factor GTPase family. LepA subfamily.

It localises to the cell inner membrane. The catalysed reaction is GTP + H2O = GDP + phosphate + H(+). Required for accurate and efficient protein synthesis under certain stress conditions. May act as a fidelity factor of the translation reaction, by catalyzing a one-codon backward translocation of tRNAs on improperly translocated ribosomes. Back-translocation proceeds from a post-translocation (POST) complex to a pre-translocation (PRE) complex, thus giving elongation factor G a second chance to translocate the tRNAs correctly. Binds to ribosomes in a GTP-dependent manner. This chain is Elongation factor 4, found in Bordetella petrii (strain ATCC BAA-461 / DSM 12804 / CCUG 43448).